Reading from the N-terminus, the 168-residue chain is Thiol peroxidase (168 aa).

The Thioredoxin domain occupies 19–168 (PQAGSKAQAF…YDAALNVLKA (150 aa)). The active-site Cysteine sulfenic acid (-SOH) intermediate is C61. C61 and C95 form a disulfide bridge.

Belongs to the peroxiredoxin family. Tpx subfamily. Homodimer.

The enzyme catalyses a hydroperoxide + [thioredoxin]-dithiol = an alcohol + [thioredoxin]-disulfide + H2O. Functionally, thiol-specific peroxidase that catalyzes the reduction of hydrogen peroxide and organic hydroperoxides to water and alcohols, respectively. Plays a role in cell protection against oxidative stress by detoxifying peroxides. In Salmonella typhimurium (strain LT2 / SGSC1412 / ATCC 700720), this protein is Thiol peroxidase.